Reading from the N-terminus, the 127-residue chain is Unclassified hydrophobin 5 (127 aa).

The signal sequence occupies residues 1–24 (MFNKQTNAIVLLFTFALFATLAVA). Cystine bridges form between C39/C107, C46/C101, C47/C92, and C108/C121.

Belongs to the fungal hydrophobin family. Self-assembles to form functional amyloid fibrils called rodlets. Self-assembly into fibrillar rodlets occurs spontaneously at hydrophobic:hydrophilic interfaces and the rodlets further associate laterally to form amphipathic monolayers.

It localises to the secreted. Its subcellular location is the cell wall. In terms of biological role, aerial growth, conidiation, and dispersal of filamentous fungi in the environment rely upon a capability of their secreting small amphipathic proteins called hydrophobins (HPBs) with low sequence identity. Class I can self-assemble into an outermost layer of rodlet bundles on aerial cell surfaces, conferring cellular hydrophobicity that supports fungal growth, development and dispersal; whereas Class II form highly ordered films at water-air interfaces through intermolecular interactions but contribute nothing to the rodlet structure. In Pleurotus ostreatus (strain PC15) (Oyster mushroom), this protein is Unclassified hydrophobin 5.